Here is a 358-residue protein sequence, read N- to C-terminus: Alanine racemase (358 aa).

The active-site Proton acceptor; specific for D-alanine is the K35. Residue K35 is modified to N6-(pyridoxal phosphate)lysine. Position 130 (R130) interacts with substrate. Y255 (proton acceptor; specific for L-alanine) is an active-site residue. Residue M303 participates in substrate binding.

This sequence belongs to the alanine racemase family. Requires pyridoxal 5'-phosphate as cofactor.

The enzyme catalyses L-alanine = D-alanine. Its pathway is amino-acid biosynthesis; D-alanine biosynthesis; D-alanine from L-alanine: step 1/1. Functionally, catalyzes the interconversion of L-alanine and D-alanine. May also act on other amino acids. This Shewanella sp. (strain MR-4) protein is Alanine racemase (alr).